Reading from the N-terminus, the 1020-residue chain is Glucan endo-1,3-beta-D-glucosidase (1020 aa).

An N-terminal signal peptide occupies residues 1 to 25; that stretch reads MKGKNVQLLFALVVIILLFPTGASA. The tract at residues 28-251 is beta-sandwich subdomain; that stretch reads HAVSVGKGSY…ADYIAIAKLP (224 aa). The GH81 domain occupies 28 to 722; it reads HAVSVGKGSY…HWIHNLAELG (695 aa). The segment at 252 to 350 is alpha/beta subdomain; the sequence is EKDGNMLAKF…EGKRFTTELT (99 aa). Residues 360–722 form a (alpha/beta)6 barrel subdomain region; the sequence is DLGDYDRERL…HWIHNLAELG (363 aa). Residues Tyr387, Lys391, His458, Asp466, His470, Asp530, Asn540, Glu542, Glu546, Glu699, and Arg704 each coordinate (1,3-beta-D-glucosyl)n. The active site involves Asp466. Catalysis depends on residues Glu542 and Glu546. The tract at residues 771–790 is disordered; the sequence is HSFNIGNGDGPTNPDPSEPD. Residues 796–922 form the CBM6 domain; it reads ERIQAEAYDA…LMNVNWFVFR (127 aa). Glu812, Trp825, Asp853, Asn878, Asp912, and Asn915 together coordinate (1,3-beta-D-glucosyl)n. Residues 928-1020 enclose the CBM56 domain; the sequence is NGDSHTHPDY…YTTEWFTYSR (93 aa).

Belongs to the glycosyl hydrolase 81 family.

The protein localises to the secreted. The catalysed reaction is Hydrolysis of (1-&gt;3)-beta-D-glucosidic linkages in (1-&gt;3)-beta-D-glucans.. Functionally, cleaves internal linkages in 1,3-beta-glucan. May contribute to plant biomass degradation. The chain is Glucan endo-1,3-beta-D-glucosidase from Halalkalibacterium halodurans (strain ATCC BAA-125 / DSM 18197 / FERM 7344 / JCM 9153 / C-125) (Bacillus halodurans).